The following is a 975-amino-acid chain: Protein spalten (975 aa).

Disordered regions lie at residues 1-31 (MKKM…QLAQ) and 64-99 (NLAQ…SNNN). Basic and acidic residues predominate over residues 8 to 17 (NKKEKKEEQS). The stretch at 21 to 70 (SSLAQQHQLAQQQYQLQQQQLQLQYQQHQQQLQLAQQQKQNEQNLAQLST) forms a coiled coil. The G-alpha domain occupies 114–458 (FCGTIMILGH…DAEKRGFTTP (345 aa)). The interval 117-130 (TIMILGHTESGKTT) is G1 motif. Residues 122–129 (GHTESGKT), 261–267 (ISAYDQK), 286–290 (GCSGK), and 373–376 (NTSD) contribute to the GTP site. Positions 259-267 (DIISAYDQK) are G2 motif. A G3 motif region spans residues 282–291 (VDLFGCSGKQ). The G4 motif stretch occupies residues 369-376 (YLIFNTSD). A G5 motif region spans residues 427–432 (VNLLDK). Disordered stretches follow at residues 455–520 (FTTP…GSST) and 541–700 (DNDS…VGSK). Composition is skewed to low complexity over residues 460-478 (NQSN…SRNS), 500-515 (LKNV…NTTT), and 544-587 (SSYS…NNAT). Residues 595 to 688 (PPKEPKPVKP…DGAAESKKNG (94 aa)) are compositionally biased toward basic and acidic residues. Residues 704–972 (ESGFGSLQGR…DNITVLVVIL (269 aa)) form the PPM-type phosphatase domain. Mn(2+) contacts are provided by Asp749, Gly750, Asp920, and Asp963.

The protein in the N-terminal section; belongs to the G-alpha family. It in the C-terminal section; belongs to the PP2C family. G proteins are composed of 3 units; alpha, beta and gamma. The alpha chain contains the guanine nucleotide binding site. The cofactor is Mg(2+). It depends on Mn(2+) as a cofactor.

Its subcellular location is the cytoplasm. It is found in the cytosol. The protein resides in the cell membrane. It catalyses the reaction O-phospho-L-seryl-[protein] + H2O = L-seryl-[protein] + phosphate. The catalysed reaction is O-phospho-L-threonyl-[protein] + H2O = L-threonyl-[protein] + phosphate. Its activity is regulated as follows. Inhibited by 50 mM NaF (sodium fluoride). Functionally, involved in cell-type differentiation and morphogenesis. Dephosphorylates casein; in vitro. May also be involved as modulators or transducers in various transmembrane signaling systems. The sequence is that of Protein spalten (spnA) from Dictyostelium discoideum (Social amoeba).